Consider the following 186-residue polypeptide: Napin embryo-specific (186 aa).

The first 21 residues, 1-21, serve as a signal peptide directing secretion; sequence MANKLFLVSATLALFFLLTNA. 2 propeptides span residues 22–38 and 77–97; these read SVYR…ATNP and PSWT…QQQG.

This sequence belongs to the 2S seed storage albumins family. In terms of assembly, the mature protein consists of a small and a large chain linked by disulfide bonds. In terms of tissue distribution, cotyledons and the axis.

Functionally, the small, basic, water-soluble napins are one of the two major kinds of storage proteins synthesized in the seed during its maturation. This is Napin embryo-specific from Brassica napus (Rape).